Here is a 223-residue protein sequence, read N- to C-terminus: Homeobox protein egl-5 (223 aa).

Low complexity predominate over residues 1–25; that stretch reads MNTSTSAFDFGSSTASSAATSTTSS. Disordered regions lie at residues 1-58 and 168-191; these read MNTS…STEA and KKEKQRVDDHTEHTPLLPANPPKG. The homeobox DNA-binding region spans 112-171; sequence SKKGRQTYQRYQTSVLEAKFQQSSYVSKKQREELRLQTQLTDRQIKIWFQNRRMKAKKEK.

It belongs to the Abd-B homeobox family. In terms of assembly, interacts with the TCF transcription factor pop-1.

It localises to the nucleus. In terms of biological role, involved in control of cell fate and pattern formation along the anterior-posterior axis, acting mainly in the tail. Required during embryonic and postembryonic development. Essential for the determination of specific neurons, including the PLM touch neurons. Plays a role in neural fate specification in the hermaphrodite-specific neuron (HSN)/PHB neuron lineage, acting in concert with T-box protein tbx-2 and the asymmetric cell division protein ham-1. Required for male gonadal fate determination, acting in parallel with a WNT/beta-catenin pathway, perhaps by recruiting pop-1 to male-specific gonadal target genes. Involved in development of the hermaphrodite hindgut, and for the response to rectal infection by the coryneform bacterium M.nematophilum. In Caenorhabditis elegans, this protein is Homeobox protein egl-5.